Consider the following 375-residue polypeptide: Succinyl-diaminopimelate desuccinylase (375 aa).

Residue His66 participates in Zn(2+) binding. Asp68 is an active-site residue. Residue Asp99 coordinates Zn(2+). Glu133 functions as the Proton acceptor in the catalytic mechanism. The Zn(2+) site is built by Glu134, Glu162, and His348.

Belongs to the peptidase M20A family. DapE subfamily. Homodimer. It depends on Zn(2+) as a cofactor. Requires Co(2+) as cofactor.

It catalyses the reaction N-succinyl-(2S,6S)-2,6-diaminopimelate + H2O = (2S,6S)-2,6-diaminopimelate + succinate. Its pathway is amino-acid biosynthesis; L-lysine biosynthesis via DAP pathway; LL-2,6-diaminopimelate from (S)-tetrahydrodipicolinate (succinylase route): step 3/3. Its function is as follows. Catalyzes the hydrolysis of N-succinyl-L,L-diaminopimelic acid (SDAP), forming succinate and LL-2,6-diaminopimelate (DAP), an intermediate involved in the bacterial biosynthesis of lysine and meso-diaminopimelic acid, an essential component of bacterial cell walls. The sequence is that of Succinyl-diaminopimelate desuccinylase from Buchnera aphidicola subsp. Acyrthosiphon pisum (strain 5A).